We begin with the raw amino-acid sequence, 452 residues long: cAMP/cGMP-dependent 3',5'-cAMP/cGMP phosphodiesterase A (452 aa).

A signal peptide spans 1–23 (MALNKKLISLLLLIFIILNIVNS). The propeptide occupies 24–49 (HQQEDCDDDDEDIGISAERSERRSVK). Asparagine 101, asparagine 141, and asparagine 277 each carry an N-linked (GlcNAc...) asparagine glycan.

This sequence belongs to the cyclic nucleotide phosphodiesterase class-II family.

The protein localises to the secreted. It is found in the extracellular space. It localises to the cell surface. The catalysed reaction is 3',5'-cyclic AMP + H2O = AMP + H(+). It catalyses the reaction 3',5'-cyclic GMP + H2O = GMP + H(+). Inhibited by dithiotreitol (DTT). In terms of biological role, phosphodiesterase which displays a preference for cAMP over cGMP. Involved in the degradation of extracellular cAMP. Maintains the responsiveness of cells to the chemoattractant cAMP during the aggregation phase of development. In Dictyostelium discoideum (Social amoeba), this protein is cAMP/cGMP-dependent 3',5'-cAMP/cGMP phosphodiesterase A (pdsA).